The sequence spans 117 residues: Anti-sigma F factor antagonist (117 aa).

An STAS domain is found at 2 to 115 (HFQLEMVTRE…QAIDRVRGIV (114 aa)). Position 58 is a phosphoserine (Ser-58).

This sequence belongs to the anti-sigma-factor antagonist family. Phosphorylated by SpoIIAB on a serine residue.

Functionally, in the phosphorylated form it could act as an anti-anti-sigma factor that counteracts SpoIIAB and thus releases sigma f from inhibition. This chain is Anti-sigma F factor antagonist (spoIIAA), found in Lysinibacillus sphaericus (Bacillus sphaericus).